The chain runs to 95 residues: Integration host factor subunit beta (95 aa).

Belongs to the bacterial histone-like protein family. In terms of assembly, heterodimer of an alpha and a beta chain.

In terms of biological role, this protein is one of the two subunits of integration host factor, a specific DNA-binding protein that functions in genetic recombination as well as in transcriptional and translational control. The polypeptide is Integration host factor subunit beta (Shewanella amazonensis (strain ATCC BAA-1098 / SB2B)).